Consider the following 274-residue polypeptide: Glutamate racemase (274 aa).

Residues 9 to 10 (DS) and 41 to 42 (YG) each bind substrate. Catalysis depends on C72, which acts as the Proton donor/acceptor. A substrate-binding site is contributed by 73-74 (NT). The active-site Proton donor/acceptor is C184. 185-186 (TH) is a substrate binding site.

This sequence belongs to the aspartate/glutamate racemases family.

The enzyme catalyses L-glutamate = D-glutamate. It participates in cell wall biogenesis; peptidoglycan biosynthesis. Provides the (R)-glutamate required for cell wall biosynthesis. In Oceanobacillus iheyensis (strain DSM 14371 / CIP 107618 / JCM 11309 / KCTC 3954 / HTE831), this protein is Glutamate racemase.